The primary structure comprises 196 residues: Orotate phosphoribosyltransferase (196 aa).

117 to 125 (EDVVTTGLS) is a 5-phospho-alpha-D-ribose 1-diphosphate binding site. Orotate is bound by residues Thr-121 and Arg-149.

The protein belongs to the purine/pyrimidine phosphoribosyltransferase family. PyrE subfamily. Homodimer. It depends on Mg(2+) as a cofactor.

It carries out the reaction orotidine 5'-phosphate + diphosphate = orotate + 5-phospho-alpha-D-ribose 1-diphosphate. Its pathway is pyrimidine metabolism; UMP biosynthesis via de novo pathway; UMP from orotate: step 1/2. Functionally, catalyzes the transfer of a ribosyl phosphate group from 5-phosphoribose 1-diphosphate to orotate, leading to the formation of orotidine monophosphate (OMP). The protein is Orotate phosphoribosyltransferase of Sphingopyxis alaskensis (strain DSM 13593 / LMG 18877 / RB2256) (Sphingomonas alaskensis).